A 240-amino-acid polypeptide reads, in one-letter code: Pyridoxine 5'-phosphate synthase (240 aa).

3-amino-2-oxopropyl phosphate is bound at residue Asn-6. 8 to 9 (DH) serves as a coordination point for 1-deoxy-D-xylulose 5-phosphate. Arg-17 is a 3-amino-2-oxopropyl phosphate binding site. The Proton acceptor role is filled by His-42. Arg-44 and His-49 together coordinate 1-deoxy-D-xylulose 5-phosphate. Catalysis depends on Glu-69, which acts as the Proton acceptor. Thr-99 is a binding site for 1-deoxy-D-xylulose 5-phosphate. Residue His-193 is the Proton donor of the active site. 3-amino-2-oxopropyl phosphate contacts are provided by residues Gly-194 and 216–217 (GH).

Belongs to the PNP synthase family. Homooctamer; tetramer of dimers.

Its subcellular location is the cytoplasm. The catalysed reaction is 3-amino-2-oxopropyl phosphate + 1-deoxy-D-xylulose 5-phosphate = pyridoxine 5'-phosphate + phosphate + 2 H2O + H(+). The protein operates within cofactor biosynthesis; pyridoxine 5'-phosphate biosynthesis; pyridoxine 5'-phosphate from D-erythrose 4-phosphate: step 5/5. Its function is as follows. Catalyzes the complicated ring closure reaction between the two acyclic compounds 1-deoxy-D-xylulose-5-phosphate (DXP) and 3-amino-2-oxopropyl phosphate (1-amino-acetone-3-phosphate or AAP) to form pyridoxine 5'-phosphate (PNP) and inorganic phosphate. The polypeptide is Pyridoxine 5'-phosphate synthase (Hydrogenobaculum sp. (strain Y04AAS1)).